A 1377-amino-acid polypeptide reads, in one-letter code: DNA-directed RNA polymerase subunit beta'' (1377 aa).

Zn(2+) is bound by residues Cys-220, Cys-291, Cys-298, and Cys-301.

This sequence belongs to the RNA polymerase beta' chain family. RpoC2 subfamily. In plastids the minimal PEP RNA polymerase catalytic core is composed of four subunits: alpha, beta, beta', and beta''. When a (nuclear-encoded) sigma factor is associated with the core the holoenzyme is formed, which can initiate transcription. Zn(2+) is required as a cofactor.

The protein localises to the plastid. The protein resides in the chloroplast. The catalysed reaction is RNA(n) + a ribonucleoside 5'-triphosphate = RNA(n+1) + diphosphate. Functionally, DNA-dependent RNA polymerase catalyzes the transcription of DNA into RNA using the four ribonucleoside triphosphates as substrates. In Nandina domestica (Heavenly bamboo), this protein is DNA-directed RNA polymerase subunit beta''.